The primary structure comprises 334 residues: Protein-methionine-sulfoxide reductase catalytic subunit MsrP (334 aa).

Residues 1 to 44 (MKKVSRLTEADVTAESAFFMQRRQVLKALGITTAALSLPTAAHA) constitute a signal peptide (tat-type signal). Mo-molybdopterin is bound by residues asparagine 88, 91-92 (YE), cysteine 146, threonine 181, asparagine 233, arginine 238, and 249-251 (GIK).

Belongs to the MsrP family. As to quaternary structure, heterodimer of a catalytic subunit (MsrP) and a heme-binding subunit (MsrQ). The cofactor is Mo-molybdopterin. Post-translationally, predicted to be exported by the Tat system. The position of the signal peptide cleavage has not been experimentally proven.

Its subcellular location is the periplasm. The enzyme catalyses L-methionyl-[protein] + a quinone + H2O = L-methionyl-(S)-S-oxide-[protein] + a quinol. It carries out the reaction L-methionyl-[protein] + a quinone + H2O = L-methionyl-(R)-S-oxide-[protein] + a quinol. Part of the MsrPQ system that repairs oxidized periplasmic proteins containing methionine sulfoxide residues (Met-O), using respiratory chain electrons. Thus protects these proteins from oxidative-stress damage caused by reactive species of oxygen and chlorine generated by the host defense mechanisms. MsrPQ is essential for the maintenance of envelope integrity under bleach stress, rescuing a wide series of structurally unrelated periplasmic proteins from methionine oxidation. The catalytic subunit MsrP is non-stereospecific, being able to reduce both (R-) and (S-) diastereoisomers of methionine sulfoxide. The polypeptide is Protein-methionine-sulfoxide reductase catalytic subunit MsrP (Cronobacter sakazakii (strain ATCC BAA-894) (Enterobacter sakazakii)).